Here is an 881-residue protein sequence, read N- to C-terminus: Alanine--tRNA ligase (881 aa).

Residues His-568, His-572, Cys-670, and His-674 each coordinate Zn(2+).

Belongs to the class-II aminoacyl-tRNA synthetase family. It depends on Zn(2+) as a cofactor.

The protein resides in the cytoplasm. It catalyses the reaction tRNA(Ala) + L-alanine + ATP = L-alanyl-tRNA(Ala) + AMP + diphosphate. Catalyzes the attachment of alanine to tRNA(Ala) in a two-step reaction: alanine is first activated by ATP to form Ala-AMP and then transferred to the acceptor end of tRNA(Ala). Also edits incorrectly charged Ser-tRNA(Ala) and Gly-tRNA(Ala) via its editing domain. The protein is Alanine--tRNA ligase of Clostridium acetobutylicum (strain ATCC 824 / DSM 792 / JCM 1419 / IAM 19013 / LMG 5710 / NBRC 13948 / NRRL B-527 / VKM B-1787 / 2291 / W).